The following is a 550-amino-acid chain: Glucose-6-phosphate isomerase (550 aa).

The active-site Proton donor is E356. Catalysis depends on residues H387 and K515.

This sequence belongs to the GPI family.

It is found in the cytoplasm. It carries out the reaction alpha-D-glucose 6-phosphate = beta-D-fructose 6-phosphate. It functions in the pathway carbohydrate biosynthesis; gluconeogenesis. Its pathway is carbohydrate degradation; glycolysis; D-glyceraldehyde 3-phosphate and glycerone phosphate from D-glucose: step 2/4. In terms of biological role, catalyzes the reversible isomerization of glucose-6-phosphate to fructose-6-phosphate. This Vibrio vulnificus (strain YJ016) protein is Glucose-6-phosphate isomerase.